Reading from the N-terminus, the 395-residue chain is Chaperone protein DnaJ (395 aa).

In terms of domain architecture, J spans 5-70 (DFYEVLGVDK…NKRAAYDRMG (66 aa)). The segment at 145-223 (GKDETIKVPT…CDGVGRVRKT (79 aa)) adopts a CR-type zinc-finger fold. Residues Cys-158, Cys-161, Cys-175, Cys-178, Cys-197, Cys-200, Cys-211, and Cys-214 each coordinate Zn(2+). 4 CXXCXGXG motif repeats span residues 158 to 165 (CERCDGQG), 175 to 182 (CGTCQGAG), 197 to 204 (CPQCGGRG), and 211 to 218 (CNDCDGVG).

It belongs to the DnaJ family. Homodimer. Requires Zn(2+) as cofactor.

The protein localises to the cytoplasm. Participates actively in the response to hyperosmotic and heat shock by preventing the aggregation of stress-denatured proteins and by disaggregating proteins, also in an autonomous, DnaK-independent fashion. Unfolded proteins bind initially to DnaJ; upon interaction with the DnaJ-bound protein, DnaK hydrolyzes its bound ATP, resulting in the formation of a stable complex. GrpE releases ADP from DnaK; ATP binding to DnaK triggers the release of the substrate protein, thus completing the reaction cycle. Several rounds of ATP-dependent interactions between DnaJ, DnaK and GrpE are required for fully efficient folding. Also involved, together with DnaK and GrpE, in the DNA replication of plasmids through activation of initiation proteins. The polypeptide is Chaperone protein DnaJ (Maricaulis maris (strain MCS10) (Caulobacter maris)).